Here is an 876-residue protein sequence, read N- to C-terminus: Alanine--tRNA ligase (876 aa).

4 residues coordinate Zn(2+): histidine 563, histidine 567, cysteine 665, and histidine 669.

The protein belongs to the class-II aminoacyl-tRNA synthetase family. It depends on Zn(2+) as a cofactor.

It localises to the cytoplasm. The enzyme catalyses tRNA(Ala) + L-alanine + ATP = L-alanyl-tRNA(Ala) + AMP + diphosphate. Functionally, catalyzes the attachment of alanine to tRNA(Ala) in a two-step reaction: alanine is first activated by ATP to form Ala-AMP and then transferred to the acceptor end of tRNA(Ala). Also edits incorrectly charged Ser-tRNA(Ala) and Gly-tRNA(Ala) via its editing domain. This is Alanine--tRNA ligase from Shouchella clausii (strain KSM-K16) (Alkalihalobacillus clausii).